The primary structure comprises 695 residues: DUF724 domain-containing protein 3 (695 aa).

Residues 376–464 (ITVTPLKQQD…GTSDTIRVDD (89 aa)) are disordered. Residues 384 to 402 (QDAETEGKKSPKKTPEPVK) show a composition bias toward basic and acidic residues. Residues 434 to 459 (NQNSNLNETDETCNVSKAGVNGTSDT) are compositionally biased toward polar residues. One can recognise a DUF724 domain in the interval 509–694 (PFTKNLPFWK…LEFITSVLAP (186 aa)). Residues 614 to 684 (VEERKCLEKR…TIDQEIANVE (71 aa)) are a coiled coil.

As to quaternary structure, homodimer.

In terms of biological role, may be involved in the polar growth of plant cells via transportation of RNAs. The chain is DUF724 domain-containing protein 3 from Arabidopsis thaliana (Mouse-ear cress).